A 455-amino-acid chain; its full sequence is Bifunctional protein GlmU (455 aa).

Positions 1 to 226 (MGLSVVILAA…EFEILGVNDR (226 aa)) are pyrophosphorylase. UDP-N-acetyl-alpha-D-glucosamine contacts are provided by residues 8-11 (LAAG), K22, Q73, 78-79 (GT), 99-101 (YGD), G136, E151, N166, and N224. D101 provides a ligand contact to Mg(2+). Mg(2+) is bound at residue N224. A linker region spans residues 227-247 (TQLASLERVWQRNVAEKIMAK). The N-acetyltransferase stretch occupies residues 248-455 (GVSIADPNRF…WQRSVKKTDK (208 aa)). UDP-N-acetyl-alpha-D-glucosamine contacts are provided by R330 and K348. The active-site Proton acceptor is H360. UDP-N-acetyl-alpha-D-glucosamine-binding residues include Y363 and N374. Residues A377, 383–384 (NY), S402, A420, and R437 contribute to the acetyl-CoA site.

In the N-terminal section; belongs to the N-acetylglucosamine-1-phosphate uridyltransferase family. It in the C-terminal section; belongs to the transferase hexapeptide repeat family. Homotrimer. Requires Mg(2+) as cofactor.

It is found in the cytoplasm. The enzyme catalyses alpha-D-glucosamine 1-phosphate + acetyl-CoA = N-acetyl-alpha-D-glucosamine 1-phosphate + CoA + H(+). The catalysed reaction is N-acetyl-alpha-D-glucosamine 1-phosphate + UTP + H(+) = UDP-N-acetyl-alpha-D-glucosamine + diphosphate. Its pathway is nucleotide-sugar biosynthesis; UDP-N-acetyl-alpha-D-glucosamine biosynthesis; N-acetyl-alpha-D-glucosamine 1-phosphate from alpha-D-glucosamine 6-phosphate (route II): step 2/2. The protein operates within nucleotide-sugar biosynthesis; UDP-N-acetyl-alpha-D-glucosamine biosynthesis; UDP-N-acetyl-alpha-D-glucosamine from N-acetyl-alpha-D-glucosamine 1-phosphate: step 1/1. It participates in bacterial outer membrane biogenesis; LPS lipid A biosynthesis. Functionally, catalyzes the last two sequential reactions in the de novo biosynthetic pathway for UDP-N-acetylglucosamine (UDP-GlcNAc). The C-terminal domain catalyzes the transfer of acetyl group from acetyl coenzyme A to glucosamine-1-phosphate (GlcN-1-P) to produce N-acetylglucosamine-1-phosphate (GlcNAc-1-P), which is converted into UDP-GlcNAc by the transfer of uridine 5-monophosphate (from uridine 5-triphosphate), a reaction catalyzed by the N-terminal domain. This Francisella tularensis subsp. tularensis (strain FSC 198) protein is Bifunctional protein GlmU.